The sequence spans 274 residues: Malonyl-[acyl-carrier protein] O-methyltransferase (274 aa).

It belongs to the methyltransferase superfamily.

It catalyses the reaction malonyl-[ACP] + S-adenosyl-L-methionine = malonyl-[ACP] methyl ester + S-adenosyl-L-homocysteine. It functions in the pathway cofactor biosynthesis; biotin biosynthesis. Converts the free carboxyl group of a malonyl-thioester to its methyl ester by transfer of a methyl group from S-adenosyl-L-methionine (SAM). It allows to synthesize pimeloyl-ACP via the fatty acid synthetic pathway. This is Malonyl-[acyl-carrier protein] O-methyltransferase from Bacteroides helcogenes (strain ATCC 35417 / DSM 20613 / JCM 6297 / CCUG 15421 / P 36-108).